Reading from the N-terminus, the 128-residue chain is Small ribosomal subunit protein eS6 (128 aa).

The protein belongs to the eukaryotic ribosomal protein eS6 family.

The polypeptide is Small ribosomal subunit protein eS6 (Methanobrevibacter smithii (strain ATCC 35061 / DSM 861 / OCM 144 / PS)).